The chain runs to 437 residues: 2-methylisoborneol synthase (437 aa).

Positions Ala32 to Pro125 are disordered. The span at Pro59–Glu73 shows a compositional bias: pro residues. The Mg(2+) site is built by Asp194, Asp195, Glu199, Asn342, Ser346, and Glu350.

The protein belongs to the terpene synthase family. 2-methylisoborneol synthase subfamily. Mg(2+) is required as a cofactor.

It catalyses the reaction (E)-2-methylgeranyl diphosphate + H2O = 2-methylisoborneol + diphosphate. Catalyzes the cyclization of 2-methylgeranyl diphosphate (2-MeGPP) to 2-methylisoborneol (2-MIB), which likely involves the intermediacy of 2-methyllinalyl diphosphate. This is 2-methylisoborneol synthase from Streptomyces griseus.